The primary structure comprises 531 residues: Tyrosine/DOPA decarboxylase 2 (531 aa).

Lys-319 is modified (N6-(pyridoxal phosphate)lysine).

Belongs to the group II decarboxylase family. In terms of assembly, homodimer. Pyridoxal 5'-phosphate is required as a cofactor. In terms of tissue distribution, predominantly expressed in the roots and stems, while a lower level expression is seen in the sepals and carpels of fully expanded flowers.

The catalysed reaction is L-tyrosine + H(+) = tyramine + CO2. It carries out the reaction L-dopa + H(+) = dopamine + CO2. The enzyme catalyses 5-hydroxy-L-tryptophan + H(+) = serotonin + CO2. Marginally higher substrate specificity for L-DOPA over L-tyrosine. This Papaver somniferum (Opium poppy) protein is Tyrosine/DOPA decarboxylase 2 (TYDC2).